The sequence spans 254 residues: O-antigen biosynthesis glycosyltransferase WbnJ (254 aa).

Belongs to the glycosyltransferase 2 family.

The enzyme catalyses an N-acetyl-alpha-D-galactosaminyl derivative + UDP-alpha-D-galactose = a beta-D-galactosyl-(1-&gt;3)-N-acetyl-alpha-D-galactosaminyl derivative + UDP + H(+). The catalysed reaction is alpha-D-GalNAc-(1-&gt;3)-alpha-D-GalNAc-di-trans,octa-cis-undecaprenyl diphosphate + UDP-alpha-D-galactose = beta-D-Gal-(1-&gt;3)-alpha-D-GalNAc-(1-&gt;3)-alpha-D-GalNAc-di-trans,octa-cis-undecaprenyl diphosphate + UDP + H(+). The protein operates within bacterial outer membrane biogenesis; LPS O-antigen biosynthesis. Its function is as follows. Involved in the assembly of the O-repeating unit during O-antigen biosynthesis. In Escherichia coli, this protein is O-antigen biosynthesis glycosyltransferase WbnJ.